Consider the following 699-residue polypeptide: TBC1 domain family member 23 (699 aa).

The Rab-GAP TBC domain occupies 44-225; sequence PLPADLRAKV…AIWDGYLQQA (182 aa). Position 300 is a phosphoserine (Ser-300). In terms of domain architecture, Rhodanese spans 334-446; the sequence is EGVRFFVVDC…LQQHLADINV (113 aa). Positions 459-479 are enriched in polar residues; sequence STSGSRSSINSVDGESPNGSS. The disordered stretch occupies residues 459-483; the sequence is STSGSRSSINSVDGESPNGSSDRGM. 3 positions are modified to phosphoserine: Ser-469, Ser-474, and Ser-507. The residue at position 514 (Thr-514) is a Phosphothreonine. The segment at 514-573 is may mediate the interaction with C17orf75, FAM91A1 and WDR11; the sequence is TPVDRMSFNLPWPDRSCTERHVSSSDRVGKPYRGVKPVFSIGDEEEYDTDEIDSSSMSDD. Positions 514-699 are may mediate the interaction with WASHC1; the sequence is TPVDRMSFNL…IMKVLDALES (186 aa). Phosphoserine occurs at positions 520 and 571. The interval 574–699 is may mediate the interaction with FKBP15 and WASHC2; required for endosome to Golgi trafficking; that stretch reads DRKEVVNIQT…IMKVLDALES (126 aa).

Directly interacts with GOLGA1 and GOLGA4. Interacts with FAM91A1, C17ORF75 and WDR11; the interaction recruits TBC1D23 to AP-1-derived vesicles. Directly interacts with WASHC1 and WASHC2A/FAM21A. Interacts with FKBP15. Isoform 1: Widely expressed, including in fetal adult brain (corpus callosum, pons, cerebellum), spinal cord, heart, skeletal muscle, thymus and bone marrow, and at lower levels in spleen. Hardly detected in liver, kidney, colon and testis. Isoform 2: Expressed at high levels in liver, kidney, colon and testis. Hardly detected in tissues expressing high levels of isoform 1. Expressed at low levels in spleen.

It localises to the golgi apparatus. It is found in the trans-Golgi network. Its subcellular location is the cytoplasmic vesicle. Putative Rab GTPase-activating protein which plays a role in vesicular trafficking. Involved in endosome-to-Golgi trafficking. Acts as a bridging protein by binding simultaneously to golgins, including GOLGA1 and GOLGA4, located at the trans-Golgi, and to the WASH complex, located on endosome-derived vesicles. Together with WDR11 complex facilitates the golgin-mediated capture of vesicles generated using AP-1. Plays a role in brain development, including in cortical neuron positioning. May also be important for neurite outgrowth, possibly through its involvement in membrane trafficking and cargo delivery, 2 processes that are essential for axonal and dendritic growth. May act as a general inhibitor of innate immunity signaling, strongly inhibiting multiple TLR and dectin/CLEC7A-signaling pathways. Does not alter initial activation events, but instead affects maintenance of inflammatory gene expression several hours after bacterial lipopolysaccharide (LPS) challenge. This Homo sapiens (Human) protein is TBC1 domain family member 23 (TBC1D23).